Consider the following 386-residue polypeptide: Protein RETICULATA-RELATED 4, chloroplastic (386 aa).

The transit peptide at 1-61 (MAIASCFFCV…RRVPITPVLS (61 aa)) directs the protein to the chloroplast. The interval 61–99 (SASSGNGGSDNNGGGLSGGGGGGDGGKNDGDGHGDEDRD) is disordered. A compositionally biased stretch (gly residues) spans 65–85 (GNGGSDNNGGGLSGGGGGGDG). The segment covering 86-99 (GKNDGDGHGDEDRD) has biased composition (basic and acidic residues). A run of 2 helical transmembrane segments spans residues 201-221 (VVFA…YLPA) and 273-293 (KLFA…NAFI).

It belongs to the RETICULATA family.

It is found in the plastid. The protein localises to the chloroplast membrane. May play a role in leaf development. This is Protein RETICULATA-RELATED 4, chloroplastic from Arabidopsis thaliana (Mouse-ear cress).